The primary structure comprises 122 residues: Large ribosomal subunit protein uL14 (122 aa).

Belongs to the universal ribosomal protein uL14 family. As to quaternary structure, part of the 50S ribosomal subunit. Forms a cluster with proteins L3 and L19. In the 70S ribosome, L14 and L19 interact and together make contacts with the 16S rRNA in bridges B5 and B8.

Binds to 23S rRNA. Forms part of two intersubunit bridges in the 70S ribosome. This Cereibacter sphaeroides (strain ATCC 17029 / ATH 2.4.9) (Rhodobacter sphaeroides) protein is Large ribosomal subunit protein uL14.